We begin with the raw amino-acid sequence, 423 residues long: Transcription factor AP-2-epsilon (423 aa).

Residues 1 to 108 (MLVHSYSSME…EDAGLLSQPH (108 aa)) form a disordered region. Positions 14 to 27 (GLSSSSPGGRLSQL) are enriched in low complexity. The PPxY motif signature appears at 50-55 (YFPPPY). Low complexity predominate over residues 57–70 (QSSLSYSQSQDGGY). The span at 79–93 (SLNSLHQHQQAAWHS) shows a compositional bias: polar residues. Residues 276–405 (RRKAANVTLL…YLLEALKLLD (130 aa)) form an H-S-H (helix-span-helix), dimerization region.

Belongs to the AP-2 family. Binds DNA as a dimer. Can form homodimers or heterodimers with other AP-2 family members.

It is found in the nucleus. Its function is as follows. Sequence-specific DNA-binding protein that interacts with inducible viral and cellular enhancer elements to regulate transcription of selected genes. AP-2 factors bind to the consensus sequence 5'-GCCNNNGGC-3' and activate genes involved in a large spectrum of important biological functions. The sequence is that of Transcription factor AP-2-epsilon from Danio rerio (Zebrafish).